The chain runs to 275 residues: Shikimate dehydrogenase (NADP(+)) (275 aa).

Shikimate is bound by residues 19 to 21 (SKS) and T66. Catalysis depends on K70, which acts as the Proton acceptor. E82 serves as a coordination point for NADP(+). 2 residues coordinate shikimate: N91 and D106. Residues 130–134 (GAGGA), 154–159 (NRTASK), and M217 each bind NADP(+). Position 219 (Y219) interacts with shikimate. Residue G241 coordinates NADP(+).

This sequence belongs to the shikimate dehydrogenase family. Homodimer.

The enzyme catalyses shikimate + NADP(+) = 3-dehydroshikimate + NADPH + H(+). It participates in metabolic intermediate biosynthesis; chorismate biosynthesis; chorismate from D-erythrose 4-phosphate and phosphoenolpyruvate: step 4/7. Involved in the biosynthesis of the chorismate, which leads to the biosynthesis of aromatic amino acids. Catalyzes the reversible NADPH linked reduction of 3-dehydroshikimate (DHSA) to yield shikimate (SA). The polypeptide is Shikimate dehydrogenase (NADP(+)) (Colwellia psychrerythraea (strain 34H / ATCC BAA-681) (Vibrio psychroerythus)).